A 404-amino-acid chain; its full sequence is Caspase-1 (404 aa).

The 91-residue stretch at 1-91 folds into the CARD domain; sequence MADKVLKEKR…YLAGTLGLSA (91 aa). A propeptide spanning residues 1-119 is cleaved from the precursor; sequence MADKVLKEKR…SFPAPQAVQD (119 aa). Lys-134 participates in a covalent cross-link: Glycyl lysine isopeptide (Lys-Gly) (interchain with G-Cter in ubiquitin). Residues His-237 and Cys-285 contribute to the active site. A propeptide spans 298–316 (interdomain linker); that stretch reads SVGVSGNLSLPTTEEFEDD. The residue at position 302 (Ser-302) is a Phosphoserine.

The protein belongs to the peptidase C14A family. As to quaternary structure, heterotetramer that consists of two anti-parallel arranged heterodimers, each one formed by a 20 kDa (Caspase-1 subunit p20) and a 10 kDa (Caspase-1 subunit p10) subunit. May be a component of the inflammasome, a protein complex which also includes PYCARD, CARD8 and NLRP2 and whose function would be the activation of pro-inflammatory caspases. Component of the AIM2 PANoptosome complex, a multiprotein complex that drives inflammatory cell death (PANoptosis). Interacts with CARD8; interacts with the released C-terminus of CARD8 which forms an inflammasome and directly activates CASP1 to promote pyroptosis. Both the p10 and p20 subunits interact with MEFV. Interacts with CARD17P/INCA and CARD18. Interacts with SERPINB1; this interaction regulates CASP1 activity. Heterotetramer that consists of two anti-parallel arranged heterodimers, each one formed by a 20 kDa (Caspase-1 subunit p20) and a 10 kDa (Caspase-1 subunit p10) subunit. Can form a heterodimer with isoform epsilon which then has an inhibitory effect. In terms of assembly, heterotetramer that consists of two anti-parallel arranged heterodimers, each one formed by a 20 kDa (Caspase-1 subunit p20) and a 10 kDa (Caspase-1 subunit p10) subunit. As to quaternary structure, can form a heterodimer with Caspase-1 subunit p20 which then has an inhibitory effect. Post-translationally, the two subunits are derived from the precursor sequence by an autocatalytic mechanism. In terms of processing, ubiquitinated via 'Lys-11'-linked polyubiquitination. Deubiquitinated by USP8. Cleavage in the interdomain linker region is required to induce pyroptosis. Expressed in larger amounts in spleen and lung. Detected in liver, heart, small intestine, colon, thymus, prostate, skeletal muscle, peripheral blood leukocytes, kidney and testis. No expression in the brain.

It is found in the cytoplasm. The protein resides in the cell membrane. It carries out the reaction Strict requirement for an Asp residue at position P1 and has a preferred cleavage sequence of Tyr-Val-Ala-Asp-|-.. Its activity is regulated as follows. (Microbial infection) Specifically inhibited by the cowpox virus Crma protein. Thiol protease involved in a variety of inflammatory processes by proteolytically cleaving other proteins, such as the precursors of the inflammatory cytokines interleukin-1 beta (IL1B) and interleukin 18 (IL18) as well as the pyroptosis inducer Gasdermin-D (GSDMD), into active mature peptides. Plays a key role in cell immunity as an inflammatory response initiator: once activated through formation of an inflammasome complex, it initiates a pro-inflammatory response through the cleavage of the two inflammatory cytokines IL1B and IL18, releasing the mature cytokines which are involved in a variety of inflammatory processes. Cleaves a tetrapeptide after an Asp residue at position P1. Also initiates pyroptosis, a programmed lytic cell death pathway, through cleavage of GSDMD. In contrast to cleavage of interleukin IL1B, recognition and cleavage of GSDMD is not strictly dependent on the consensus cleavage site but depends on an exosite interface on CASP1 that recognizes and binds the Gasdermin-D, C-terminal (GSDMD-CT) part. Cleaves and activates CASP7 in response to bacterial infection, promoting plasma membrane repair. Upon inflammasome activation, during DNA virus infection but not RNA virus challenge, controls antiviral immunity through the cleavage of CGAS, rendering it inactive. In apoptotic cells, cleaves SPHK2 which is released from cells and remains enzymatically active extracellularly. Functionally, apoptosis inactive. The polypeptide is Caspase-1 (CASP1) (Homo sapiens (Human)).